A 677-amino-acid polypeptide reads, in one-letter code: Polyunsaturated fatty acid lipoxygenase ALOX8 (677 aa).

Residues 2–125 form the PLAT domain; it reads AKCRVRVSTG…ELVLREGAAK (124 aa). Ca(2+) is bound by residues Gly15, Gly17, Asp39, His40, Gly42, Glu44, Asp86, and Ala87. One can recognise a Lipoxygenase domain in the interval 126–677; the sequence is VSWQDHHPTL…PPLIENSVSI (552 aa). Fe cation-binding residues include His374, His379, His554, and Ile677.

It belongs to the lipoxygenase family. Fe cation is required as a cofactor. As to expression, expressed in epidermis and brain. No expression found in heart, spleen, liver, skeletal muscle, kidney or testis.

It localises to the cytoplasm. The protein localises to the cytosol. It is found in the membrane. It carries out the reaction (9Z,12Z)-octadecadienoate + O2 = (9S)-hydroperoxy-(10E,12Z)-octadecadienoate. The enzyme catalyses (5Z,8Z,11Z,14Z)-eicosatetraenoate + O2 = (8S)-hydroperoxy-(5Z,9E,11Z,14Z)-eicosatetraenoate. The catalysed reaction is (15S)-hydroperoxy-(5Z,8Z,11Z,13E)-eicosatetraenoate + O2 = (8S,15S)-dihydroperoxy-(5Z,9E,11Z,13E)-eicosatetraenoate. It catalyses the reaction (8S)-hydroperoxy-(5Z,9E,11Z,14Z)-eicosatetraenoate + O2 = (8S,15S)-dihydroperoxy-(5Z,9E,11Z,13E)-eicosatetraenoate. It carries out the reaction 1-octadecanoyl-2-(5Z,8Z,11Z,14Z-eicosatetraenoyl)-sn-glycero-3-phosphocholine + O2 = 1-octadecanoyl-2-(15-hydroperoxy-5Z,8Z,11Z,13E-eicosatetraenoyl)-sn-glycero-3-phosphocholine. The enzyme catalyses a 1-acyl-2-(5Z,8Z,11Z,14Z-eicosatetraenoyl)-sn-glycero-3-phospho-(1D-myo-inositol) + O2 = a 1-acyl-2-(15-hydroperoxy-5Z,8Z,11Z,13E-eicosatetraenoyl)-sn-glycero-3-phospho-(1D-myo-inositol). The catalysed reaction is a 1-acyl-2-(8Z,11Z,14Z-eicosatrienoyl)-sn-glycero-3-phospho-(1D-myo-inositol) + O2 = a 1-acyl-2-(15-hydroperoxy-8Z,11Z,13E-eicosatrienoyl)-sn-glycero-3-phospho-(1D-myo-inositol). It catalyses the reaction (5Z,8Z,11Z,14Z)-eicosatetraenoate + O2 = 9-hydroperoxy-(5Z,7E,11Z,14Z)-eicosatetraenoate. It carries out the reaction (5Z,8Z,11Z,14Z)-eicosatetraenoate + O2 = 11-hydroperoxy-(5Z,8Z,12E,14Z)-eicosatetraenoate. The enzyme catalyses (8Z,11Z,14Z)-eicosatrienoate + O2 = 15-hydroperoxy-(8Z,11Z,13E)-eicosatrienoate. Its pathway is lipid metabolism; hydroperoxy eicosatetraenoic acid biosynthesis. Non-heme iron-containing dioxygenase that catalyzes the stereo-specific peroxidation of free and esterified polyunsaturated fatty acids generating a spectrum of bioactive lipid mediators. Catalyzes the peroxidation of arachidonate and linoleate into (8S)-HPETE and (9S)-HPODE respectively. In addition to generate (8S)-HPETE from free arachidonic acid (AA), may produce other HETE isomers from phospholipid-esterified polyunsaturated fatty acids and minor products derived from (8S)-HPETE itself that may include leukotriene A4 and 8,15-diHPETE. With free arachidonate as substrate, has no detectable 15S-lipoxygenase activity and only displays a 8S-lipoxygenase activity. However may have a 15S-lipoxygenase activity with (8S)-HPETE to produce (8S,15S)-diHPETE and when oxidizes directly arachidonic acid esterified to membrane-bound phospholipids to produce a phospholipid-esterified 15-HpETE. May also catalyze (15S)-HPETE peroxidation to produce 8,15-diHPETE. May play a role in keratinocyte differentiation through activation of the peroxisome proliferator activated receptor signaling pathway. The chain is Polyunsaturated fatty acid lipoxygenase ALOX8 from Mus musculus (Mouse).